A 343-amino-acid polypeptide reads, in one-letter code: Uroporphyrinogen decarboxylase (343 aa).

Residues 23–27, Asp-73, Tyr-151, Ser-206, and His-322 each bind substrate; that span reads RQAGR.

Belongs to the uroporphyrinogen decarboxylase family. In terms of assembly, homodimer.

It localises to the cytoplasm. It catalyses the reaction uroporphyrinogen III + 4 H(+) = coproporphyrinogen III + 4 CO2. It functions in the pathway porphyrin-containing compound metabolism; protoporphyrin-IX biosynthesis; coproporphyrinogen-III from 5-aminolevulinate: step 4/4. Catalyzes the decarboxylation of four acetate groups of uroporphyrinogen-III to yield coproporphyrinogen-III. In Granulibacter bethesdensis (strain ATCC BAA-1260 / CGDNIH1), this protein is Uroporphyrinogen decarboxylase.